The chain runs to 727 residues: NADH-ubiquinone oxidoreductase 75 kDa subunit, mitochondrial (727 aa).

A mitochondrion-targeting transit peptide spans 1–23 (MLRIPVRKALVGLSKSPKGCVRT). In terms of domain architecture, 2Fe-2S ferredoxin-type spans 30–108 (NLIEVFVDGQ…GWNILTNSEK (79 aa)). [2Fe-2S] cluster is bound by residues cysteine 64, cysteine 75, and cysteine 78. Position 84 is an N6-acetyllysine (lysine 84). Cysteine 92 contributes to the [2Fe-2S] cluster binding site. Residues 108–147 (KSKKAREGVMEFLLANHPLDCPICDQGGECDLQDQSMMFG) enclose the 4Fe-4S His(Cys)3-ligated-type domain. [4Fe-4S] cluster-binding residues include histidine 124, cysteine 128, cysteine 131, cysteine 137, cysteine 176, cysteine 179, cysteine 182, and cysteine 226. The 4Fe-4S Mo/W bis-MGD-type domain occupies 245-301 (TRKTESIDVMDAVGSNIVVSTRTGEVMRILPRMHEDINEEWISDKTRFAYDGLKRQR). Residues lysine 467, lysine 499, and lysine 709 each carry the N6-acetyllysine modification.

The protein belongs to the complex I 75 kDa subunit family. Core subunit of respiratory chain NADH dehydrogenase (Complex I) which is composed of 45 different subunits. This is the largest subunit of complex I and it is a component of the iron-sulfur (IP) fragment of the enzyme. Complex I associates with ubiquinol-cytochrome reductase complex (Complex III) to form supercomplexes. Interacts with MDM2 and AKAP1. [2Fe-2S] cluster serves as cofactor. It depends on [4Fe-4S] cluster as a cofactor.

It localises to the mitochondrion inner membrane. The enzyme catalyses a ubiquinone + NADH + 5 H(+)(in) = a ubiquinol + NAD(+) + 4 H(+)(out). In terms of biological role, core subunit of the mitochondrial membrane respiratory chain NADH dehydrogenase (Complex I) which catalyzes electron transfer from NADH through the respiratory chain, using ubiquinone as an electron acceptor. Essential for catalysing the entry and efficient transfer of electrons within complex I. Plays a key role in the assembly and stability of complex I and participates in the association of complex I with ubiquinol-cytochrome reductase complex (Complex III) to form supercomplexes. This chain is NADH-ubiquinone oxidoreductase 75 kDa subunit, mitochondrial (NDUFS1), found in Macaca fascicularis (Crab-eating macaque).